The following is a 232-amino-acid chain: Small ribosomal subunit protein uS3 (232 aa).

In terms of domain architecture, KH type-2 spans 39-107 (VRQFLTKELA…PAQINIAEVR (69 aa)).

Belongs to the universal ribosomal protein uS3 family. As to quaternary structure, part of the 30S ribosomal subunit. Forms a tight complex with proteins S10 and S14.

Functionally, binds the lower part of the 30S subunit head. Binds mRNA in the 70S ribosome, positioning it for translation. In Yersinia pseudotuberculosis serotype O:1b (strain IP 31758), this protein is Small ribosomal subunit protein uS3.